A 138-amino-acid chain; its full sequence is Small ribosomal subunit protein uS11c (138 aa).

A disordered region spans residues 1–22 (MAKSIPKTGSRKNVRIGSRNQT).

Belongs to the universal ribosomal protein uS11 family. Part of the 30S ribosomal subunit.

Its subcellular location is the plastid. It localises to the chloroplast. The sequence is that of Small ribosomal subunit protein uS11c from Phaseolus angularis (Azuki bean).